Reading from the N-terminus, the 1011-residue chain is Protein translocase subunit SecA, chloroplastic (1011 aa).

The span at 1–17 shows a compositional bias: polar residues; that stretch reads MATSSLCSSFTSQTCNP. Residues 1–22 form a disordered region; the sequence is MATSSLCSSFTSQTCNPHSRPH. The N-terminal 59 residues, 1–59, are a transit peptide targeting the chloroplast; sequence MATSSLCSSFTSQTCNPHSRPHRKTLTLPGSVFLCRQFHLNSPSVSKTRRIRTRQSGPV. 164–171 serves as a coordination point for ATP; it reads MRTGEGKT. Residues 976-1011 form a disordered region; it reads QDKMENQKSGKRNARPPTDTNPDPVGTVEPSTSASS.

This sequence belongs to the SecA family.

Its subcellular location is the plastid. It is found in the chloroplast stroma. It localises to the chloroplast thylakoid membrane. It catalyses the reaction ATP + H2O + chloroplast-proteinSide 1 = ADP + phosphate + chloroplast-proteinSide 2.. In terms of biological role, has a central role in coupling the hydrolysis of ATP to the transfer of proteins across the thylakoid membrane. Facilitates the transport of precursor proteins from the chloroplast stroma to thylakoid lumen. This Pisum sativum (Garden pea) protein is Protein translocase subunit SecA, chloroplastic.